The primary structure comprises 142 residues: SsrA-binding protein (142 aa).

Belongs to the SmpB family.

It localises to the cytoplasm. In terms of biological role, required for rescue of stalled ribosomes mediated by trans-translation. Binds to transfer-messenger RNA (tmRNA), required for stable association of tmRNA with ribosomes. tmRNA and SmpB together mimic tRNA shape, replacing the anticodon stem-loop with SmpB. tmRNA is encoded by the ssrA gene; the 2 termini fold to resemble tRNA(Ala) and it encodes a 'tag peptide', a short internal open reading frame. During trans-translation Ala-aminoacylated tmRNA acts like a tRNA, entering the A-site of stalled ribosomes, displacing the stalled mRNA. The ribosome then switches to translate the ORF on the tmRNA; the nascent peptide is terminated with the 'tag peptide' encoded by the tmRNA and targeted for degradation. The ribosome is freed to recommence translation, which seems to be the essential function of trans-translation. This is SsrA-binding protein from Mycoplasma mobile (strain ATCC 43663 / 163K / NCTC 11711) (Mesomycoplasma mobile).